The sequence spans 239 residues: Tetraspanin-9 (239 aa).

Topologically, residues 1 to 13 (MARGCLCCLKYMM) are cytoplasmic. Residues 14–34 (FLFNLIFWLCGCGLLGVGIWL) traverse the membrane as a helical segment. Residues 35–55 (SVSQGNFATFSPSFPSLSAAN) lie on the Extracellular side of the membrane. Residues 56 to 76 (LVIVIGTVVMVTGFLGCLGAI) form a helical membrane-spanning segment. Over 77 to 85 (KENKCLLLS) the chain is Cytoplasmic. The helical transmembrane segment at 86-106 (FFIILLIILLTELILLILFFV) threads the bilayer. Topologically, residues 107–203 (YMDKVNENAK…VKMWFDDNKH (97 aa)) are extracellular. Asn-180 is a glycosylation site (N-linked (GlcNAc...) asparagine). A helical transmembrane segment spans residues 204 to 224 (VLGTIGMCILIIQILGMAFSM). The Cytoplasmic portion of the chain corresponds to 225–239 (TLFQQIHRTGKKYDA).

The protein belongs to the tetraspanin (TM4SF) family.

It localises to the membrane. The polypeptide is Tetraspanin-9 (tspan9) (Xenopus laevis (African clawed frog)).